The sequence spans 842 residues: Transient receptor potential cation channel subfamily V member 1 (842 aa).

Residues 1-64 form a disordered region; that stretch reads MKRWVSLDSG…DSEETSPMDC (64 aa). The Cytoplasmic portion of the chain corresponds to 1-435; sequence MKRWVSLDSG…QDKWDRVVKR (435 aa). Residues 10–21 show a composition bias toward acidic residues; that stretch reads GESEDPLPEDTC. One copy of the ANK 1 repeat lies at 113–141; sequence KLYDRRRIFEAVAQNNCQELESLLCFLQR. Residue Arg118 coordinates ATP. Thr147 bears the Phosphothreonine; by PKA; in vitro mark. The ANK 2 repeat unit spans residues 156-188; sequence TGKTCLLKAMLNLHSGQNDTIPLLLEIARQTDS. ATP is bound by residues Lys158, Lys163, Asn167, 202-205, and 213-214; these read YKGQ and ER. 4 ANK repeats span residues 206–231, 252–279, 288–324, and 338–361; these read TALHIAIERRNMALVTLLVENGADVQ, ELPLSLAACTNQLAIVKFLLQNSWQPAD, NTVLHALVEVADNTPDNTKFVTSMYNEILILGAKLHP, and TPLALAAGSGKIGVLAYILQREIL. Residue Thr373 is modified to Phosphothreonine; by PKA; in vitro. An ANK 7 repeat occupies 396-418; that stretch reads NSVLEVIAYSSSETPNRHDMLLV. The chain crosses the membrane as a helical span at residues 436-457; it reads IFYFNFFVYCLYMIIFTTAAYY. The Extracellular segment spans residues 458-475; that stretch reads RPVDGLPPYKLRNLPGDY. The helical transmembrane segment at 476–500 threads the bilayer; sequence FRVTGEILSVAGGVYFFFRGIQYFL. Over 501 to 513 the chain is Cytoplasmic; sequence QRRPSMKALFVDS. Ser505 bears the Phosphoserine; by PKC/PRKCE mark. 514–515 lines the resiniferatoxin pocket; it reads YS. Residues 514-535 form a helical membrane-spanning segment; the sequence is YSEMLFFVQALFMLATVVLYFS. Topologically, residues 536–538 are extracellular; sequence HCK. Residues 539–559 form a helical membrane-spanning segment; that stretch reads EYVATMVFSLALGWINMLYYT. Resiniferatoxin is bound at residue Arg560. The Cytoplasmic segment spans residues 560 to 562; it reads RGF. Residues 563-601 traverse the membrane as a helical segment; sequence QQMGIYAVMIEKMILRDLCRFMFVYLVFLFGFSTAVVTL. The Extracellular portion of the chain corresponds to 602 to 633; it reads IEDGKNSSTSAESTSHRWRGFGCRSSDSSYNS. N-linked (GlcNAc...) asparagine glycosylation is present at Asn607. The pore-forming intramembrane region spans 634 to 655; the sequence is LYSTCLELFKFTIGMGDLEFTE. Gly647 contacts Na(+). The short motif at 647 to 650 is the Selectivity filter element; it reads GMGD. Asp650 provides a ligand contact to Ca(2+). Topologically, residues 656–659 are extracellular; sequence NYDF. A helical transmembrane segment spans residues 660–686; the sequence is KAVFIILLLAYVILTYILLLNMLIALM. The Cytoplasmic portion of the chain corresponds to 687 to 842; sequence GETVNKIAQE…FKDSVAAAEK (156 aa). The AD stretch occupies residues 688–716; that stretch reads ETVNKIAQESKSIWKLQRAITILDTEKGF. At Thr708 the chain carries Phosphothreonine. The segment at 771–805 is interaction with calmodulin; that stretch reads EGVKRTLSFSLRSGRVSGRNWKNFALVPLLRDAST. A Phosphoserine modification is found at Ser778. The segment at 781–796 is required for PIP2-mediated channel inhibition; that stretch reads LRSGRVSGRNWKNFAL. Position 804 is a phosphoserine; by PKC/PRKCE and PKC/PRKCZ (Ser804). Residue Ser824 is modified to Phosphoserine.

The protein belongs to the transient receptor (TC 1.A.4) family. TrpV subfamily. TRPV1 sub-subfamily. In terms of assembly, homotetramer. Interacts with PIRT. May also form a heteromeric channel with TRPV3. Interacts with CALM, PRKCM and CSK. Interacts with PRKCG and NTRK1, probably by forming a trimeric complex. Interacts with the Scolopendra mutilans RhTx toxin. Interacts with TMEM100. Interacts with PACS2. Post-translationally, phosphorylation by PKA reverses capsaicin-induced dephosphorylation at multiple sites. Phosphorylation by CAMKII seems to regulate binding to vanilloids. Phosphorylated and modulated by PRKCE, PRKCM and probably PRKCZ. Dephosphorylation by calcineurin seems to lead to receptor desensitization and phosphorylation by CAMKII recovers activity.

The protein localises to the postsynaptic cell membrane. It is found in the cell projection. Its subcellular location is the dendritic spine membrane. It localises to the cell membrane. It carries out the reaction Ca(2+)(in) = Ca(2+)(out). It catalyses the reaction Mg(2+)(in) = Mg(2+)(out). The enzyme catalyses Na(+)(in) = Na(+)(out). The catalysed reaction is K(+)(in) = K(+)(out). With respect to regulation, the channel is sensitized by ATP binding. Repeated stimulation with capsaicin gives rise to progressively smaller responses, due to desensitization. This desensitization is triggered by the influx of calcium ions and is inhibited by elevated ATP levels. Ca(2+) and CALM displace ATP from its binding site and trigger a conformation change that leads to a closed, desensitized channel. The double-knot toxin (DkTx) from the Chinese earth tiger tarantula activates the channel and traps it in an open conformation. The Scolopendra mutilans RhTx toxin potentiates the heat activation pathway mediated by this channel by binding to the charge-rich outer pore region (in an activated state). Channel activity is activated via the interaction with PIRT and phosphatidylinositol 4,5-bisphosphate (PIP2). Both PIRT and PIP2 are required to activate channel activity. Intracellular PIP2 inhibits desensitization. Functionally, non-selective calcium permeant cation channel involved in detection of noxious chemical and thermal stimuli. Seems to mediate proton influx and may be involved in intracellular acidosis in nociceptive neurons. Involved in mediation of inflammatory pain and hyperalgesia. Sensitized by a phosphatidylinositol second messenger system activated by receptor tyrosine kinases, which involves PKC isozymes and PCL. Activation by vanilloids, like capsaicin, and temperatures higher than 42 degrees Celsius. Upon activation, exhibits a time- and Ca(2+)-dependent outward rectification, followed by a long-lasting refractory state. Mild extracellular acidic pH (6.5) potentiates channel activation by noxious heat and vanilloids, whereas acidic conditions (pH &lt;6) directly activate the channel. Can be activated by endogenous compounds, including 12-hydroperoxytetraenoic acid and bradykinin. Acts as ionotropic endocannabinoid receptor with central neuromodulatory effects. Triggers a form of long-term depression (TRPV1-LTD) mediated by the endocannabinoid anandamine in the hippocampus and nucleus accumbens by affecting AMPA receptors endocytosis. In Oryctolagus cuniculus (Rabbit), this protein is Transient receptor potential cation channel subfamily V member 1 (Trpv1).